The primary structure comprises 3164 residues: Large tegument protein deneddylase (3164 aa).

The interval 1–273 (MGGGNNTNPG…SETYLQDEAF (273 aa)) is deubiquitination activity. Residues 45–263 (VVTGARNQFA…TAAALHLYGA (219 aa)) form the Peptidase C76 domain. Residues cysteine 65, aspartate 197, and histidine 199 contribute to the active site. The segment at 289–508 (AGLGEPCVGV…GEDDGPTVPA (220 aa)) is disordered. The span at 308 to 321 (GPHPPTAAQSPPPT) shows a compositional bias: pro residues. Residues 343–353 (PEAKRPNRAPD) are compositionally biased toward basic and acidic residues. The segment covering 365 to 390 (PTDPPSADPPSADPPSAIPPPPPSAP) has biased composition (pro residues). A compositionally biased stretch (basic residues) spans 416-432 (GRHRARYSAGLPKRRRP). Positions 426–432 (LPKRRRP) are nuclear localization signal. Residues 579–609 (LELCVIFFFERVLAFLIENGARTHTQAGVAG) form an interaction with inner tegument protein region. Residues 579–609 (LELCVIFFFERVLAFLIENGARTHTQAGVAG) form an interaction with UL37 region. 3 disordered regions span residues 2296–2318 (QTLS…LYRP), 2518–2552 (HPVY…LGPG), and 2583–3020 (ASDD…SLSG). Pro residues predominate over residues 2653 to 2667 (QSSPAPPDATAPRPP). Residues 2668-2680 (ASSRASAASSSGS) are compositionally biased toward low complexity. A compositionally biased stretch (basic residues) spans 2681-2690 (RARRHRRARS). The span at 2722 to 2732 (PPAPPKPPEPA) shows a compositional bias: pro residues. Positions 2834 to 2843 (PAEPTSSSPA) are enriched in low complexity. Pro residues predominate over residues 2844 to 2866 (GPSPPPPAVQPVAPPPTSGPPPT). The span at 2886-2897 (TRQPVATPTTSA) shows a compositional bias: polar residues. A run of 35 repeats spans residues 2911 to 2912 (PQ), 2913 to 2914 (PQ), 2915 to 2916 (PQ), 2917 to 2918 (PQ), 2919 to 2920 (PQ), 2921 to 2922 (PQ), 2923 to 2924 (PQ), 2925 to 2926 (PQ), 2927 to 2928 (PQ), 2929 to 2930 (PQ), 2931 to 2932 (PQ), 2933 to 2934 (PQ), 2935 to 2936 (PQ), 2937 to 2938 (PQ), 2939 to 2940 (PQ), 2941 to 2942 (PQ), 2943 to 2944 (PQ), 2945 to 2946 (PQ), 2947 to 2948 (PQ), 2949 to 2950 (PQ), 2951 to 2952 (PQ), 2953 to 2954 (PQ), 2955 to 2956 (PQ), 2957 to 2958 (PQ), 2959 to 2960 (PQ), 2961 to 2962 (PQ), 2963 to 2964 (PQ), 2965 to 2966 (PQ), 2967 to 2968 (PQ), 2969 to 2970 (PQ), 2971 to 2972 (PQ), 2973 to 2974 (PQ), 2975 to 2976 (PQ), 2977 to 2978 (PQ), and 2979 to 2980 (PQ). Residues 2911-2980 (PQPQPQPQPQ…PQPQPQPQPQ (70 aa)) are 35 X 2 AA tandem repeats of P-Q. Over residues 2912–2978 (QPQPQPQPQP…PQPQPQPQPQ (67 aa)) the composition is skewed to pro residues. Positions 2999–3014 (NRPSVPASASSTNPRT) are enriched in polar residues.

It belongs to the herpesviridae large tegument protein family. As to quaternary structure, interacts with host CUL1 and CUL4A; these interactions inhibit the E3 ligase activity of cullins. Interacts with inner tegument protein. Interacts with capsid vertex specific component CVC2. Interacts with the major capsid protein/MCP. Interacts with VP16; this interaction is important for outer tegument association to the capsid. May form homodimers. Proteolytically processed, possibly into several polypeptides. Enzymatic activity is only detectable following cleavage of the UL36 protein, which occurs late during viral replication.

Its subcellular location is the virion tegument. It localises to the host cytoplasm. It is found in the host nucleus. The enzyme catalyses Thiol-dependent hydrolysis of ester, thioester, amide, peptide and isopeptide bonds formed by the C-terminal Gly of ubiquitin (a 76-residue protein attached to proteins as an intracellular targeting signal).. In terms of biological role, large tegument protein that plays multiple roles in the viral cycle. During viral entry, remains associated with the capsid while most of the tegument is detached and participates in the capsid transport toward the host nucleus. Plays a role in the routing of the capsid at the nuclear pore complex and subsequent uncoating. Within the host nucleus, acts as a deneddylase and promotes the degradation of nuclear CRLs (cullin-RING ubiquitin ligases) and thereby stabilizes nuclear CRL substrates, while cytoplasmic CRLs remain unaffected. These modifications prevent host cell cycle S-phase progression and create a favorable environment allowing efficient viral genome replication. Participates later in the secondary envelopment of capsids. Indeed, plays a linker role for the association of the outer viral tegument to the capsids together with the inner tegument protein. The chain is Large tegument protein deneddylase from Human herpesvirus 1 (strain 17) (HHV-1).